The sequence spans 349 residues: Core protein VP7 (349 aa).

N287 carries N-linked (GlcNAc...) asparagine; by host glycosylation.

The protein belongs to the orbivirus VP7 family. Homotrimer that assemble in a complex of 260 capsomers on an inner scaffold composed of VP3.

It is found in the virion. Functionally, the VP7 protein is one of the five proteins (with VP1, VP3, VP4, and VP6) which form the inner capsid of the virus. The sequence is that of Core protein VP7 (Segment-7) from Antilocapra americana (Pronghorn).